The sequence spans 159 residues: Transcription antitermination protein NusB (159 aa).

It belongs to the NusB family.

Involved in transcription antitermination. Required for transcription of ribosomal RNA (rRNA) genes. Binds specifically to the boxA antiterminator sequence of the ribosomal RNA (rrn) operons. The sequence is that of Transcription antitermination protein NusB from Stenotrophomonas maltophilia (strain K279a).